The primary structure comprises 485 residues: Ribosomal protein uS12 methylthiotransferase RimO (485 aa).

One can recognise an MTTase N-terminal domain in the interval V19–A135. [4Fe-4S] cluster is bound by residues C28, C64, C98, C172, C176, and C179. The Radical SAM core domain occupies A158–R387. Positions Q390 to E461 constitute a TRAM domain.

The protein belongs to the methylthiotransferase family. RimO subfamily. [4Fe-4S] cluster is required as a cofactor.

The protein localises to the cytoplasm. It catalyses the reaction L-aspartate(89)-[ribosomal protein uS12]-hydrogen + (sulfur carrier)-SH + AH2 + 2 S-adenosyl-L-methionine = 3-methylsulfanyl-L-aspartate(89)-[ribosomal protein uS12]-hydrogen + (sulfur carrier)-H + 5'-deoxyadenosine + L-methionine + A + S-adenosyl-L-homocysteine + 2 H(+). Functionally, catalyzes the methylthiolation of an aspartic acid residue of ribosomal protein uS12. This is Ribosomal protein uS12 methylthiotransferase RimO from Symbiobacterium thermophilum (strain DSM 24528 / JCM 14929 / IAM 14863 / T).